Here is an 889-residue protein sequence, read N- to C-terminus: DNA gyrase subunit A (889 aa).

In terms of domain architecture, Topo IIA-type catalytic spans Leu35 to Leu501. Tyr123 acts as the O-(5'-phospho-DNA)-tyrosine intermediate in catalysis. The GyrA-box motif lies at Gln528–Gly534. Positions Lys811 to Glu889 are disordered. Residues Asp813–Gln823 are compositionally biased toward acidic residues. Over residues Asp863–Arg875 the composition is skewed to basic and acidic residues. Over residues Val876–Glu889 the composition is skewed to acidic residues.

Belongs to the type II topoisomerase GyrA/ParC subunit family. In terms of assembly, heterotetramer, composed of two GyrA and two GyrB chains. In the heterotetramer, GyrA contains the active site tyrosine that forms a transient covalent intermediate with DNA, while GyrB binds cofactors and catalyzes ATP hydrolysis.

The protein resides in the cytoplasm. It catalyses the reaction ATP-dependent breakage, passage and rejoining of double-stranded DNA.. Functionally, a type II topoisomerase that negatively supercoils closed circular double-stranded (ds) DNA in an ATP-dependent manner to modulate DNA topology and maintain chromosomes in an underwound state. Negative supercoiling favors strand separation, and DNA replication, transcription, recombination and repair, all of which involve strand separation. Also able to catalyze the interconversion of other topological isomers of dsDNA rings, including catenanes and knotted rings. Type II topoisomerases break and join 2 DNA strands simultaneously in an ATP-dependent manner. This is DNA gyrase subunit A from Staphylococcus aureus.